Reading from the N-terminus, the 360-residue chain is Olfactory receptor 1L1 (360 aa).

The Extracellular portion of the chain corresponds to 1-75 (MERNHNPDNC…GLSSRPEDQK (75 aa)). N55 carries an N-linked (GlcNAc...) asparagine glycan. Residues 76–99 (PLFAVFLPIYLITVIGNLLIILAI) form a helical membrane-spanning segment. The Cytoplasmic portion of the chain corresponds to 100–107 (RSDTRLQT). Residues 108–129 (PMYFFLSILSFVDICYVTVIIP) traverse the membrane as a helical segment. Over 130-150 (KMLVNFLSETKTISYSECLTQ) the chain is Extracellular. The cysteines at positions 147 and 239 are disulfide-linked. The chain crosses the membrane as a helical span at residues 151 to 170 (MYFFLAFGNTDSYLLAAMAI). The Cytoplasmic segment spans residues 171–189 (DRYVAICNPFHYITIMSHR). Residues 190–208 (CCVLLLVLSFCIPHFHSLL) traverse the membrane as a helical segment. The Extracellular segment spans residues 209 to 246 (HILLTNQLIFCASNVIHHFFCDDQPVLKLSCSSHFVKE). A helical membrane pass occupies residues 247-269 (ITVMTEGLAVIMTPFSCIIISYL). At 270–286 (RILITVLKIPSAAGKRK) the chain is on the cytoplasmic side. A helical transmembrane segment spans residues 287–309 (AFSTCGSHLTVVTLFYGSISYLY). Topologically, residues 310–321 (FQPLSNYTVKDQ) are extracellular. The N-linked (GlcNAc...) asparagine glycan is linked to N315. Residues 322–341 (IATIIYTVLTPMLNPFIYSL) traverse the membrane as a helical segment. Residues 342–360 (RNKDMKQGLAKLMHRMKCQ) are Cytoplasmic-facing.

The protein belongs to the G-protein coupled receptor 1 family.

It is found in the cell membrane. Odorant receptor. This is Olfactory receptor 1L1 (OR1L1) from Homo sapiens (Human).